The sequence spans 140 residues: Large ribosomal subunit protein uL11 (140 aa).

It belongs to the universal ribosomal protein uL11 family. In terms of assembly, part of the ribosomal stalk of the 50S ribosomal subunit. Interacts with L10 and the large rRNA to form the base of the stalk. L10 forms an elongated spine to which L12 dimers bind in a sequential fashion forming a multimeric L10(L12)X complex. In terms of processing, one or more lysine residues are methylated.

Functionally, forms part of the ribosomal stalk which helps the ribosome interact with GTP-bound translation factors. In Heliobacterium modesticaldum (strain ATCC 51547 / Ice1), this protein is Large ribosomal subunit protein uL11.